Consider the following 218-residue polypeptide: Adenylate kinase (218 aa).

10–15 (GAGKGT) is an ATP binding site. The tract at residues 30-59 (STGDMLRAAVKAGTPLGLEAKKVMDAGGLV) is NMP. AMP is bound by residues Thr31, Arg36, 57-59 (GLV), 85-88 (GFPR), and Gln92. The interval 122 to 159 (ERRVHPASGRSYHVRFNPPKAEGVDDVTGEPLVQRDDD) is LID. ATP-binding positions include Arg123 and 132–133 (SY). 2 residues coordinate AMP: Arg156 and Arg167. Gly203 serves as a coordination point for ATP.

This sequence belongs to the adenylate kinase family. Monomer.

It is found in the cytoplasm. It carries out the reaction AMP + ATP = 2 ADP. The protein operates within purine metabolism; AMP biosynthesis via salvage pathway; AMP from ADP: step 1/1. In terms of biological role, catalyzes the reversible transfer of the terminal phosphate group between ATP and AMP. Plays an important role in cellular energy homeostasis and in adenine nucleotide metabolism. The chain is Adenylate kinase from Bordetella pertussis (strain Tohama I / ATCC BAA-589 / NCTC 13251).